The primary structure comprises 146 residues: Hemoglobin subunit beta-2 (146 aa).

The region spanning 2-146 is the Globin domain; that stretch reads KWTDKERAVI…VVSALGKQYC (145 aa). Heme b is bound by residues His63 and His92.

The protein belongs to the globin family. In terms of assembly, heterotetramer of two alpha chains and two beta chains. As to expression, red blood cells.

Involved in oxygen transport from gills to the various peripheral tissues. This is Hemoglobin subunit beta-2 (hbb2) from Lycodes reticulatus (Arctic eelpout).